The primary structure comprises 279 residues: Zinc-finger homeodomain protein 1 (279 aa).

Over residues 1–13 the composition is skewed to acidic residues; sequence MDFDDHDDGDEEM. The disordered stretch occupies residues 1–47; that stretch reads MDFDDHDDGDEEMPPMPVSSSYETPPQHGLAGGGMAPKPPGEIGSRV. The ZF-HD dimerization-type; degenerate zinc finger occupies 57–106; it reads YRECLKNHAVGIGGHAVDGCGEFMAAGEEGTIDALRCAACNCHRNFHRKE. Positions 168-190 are disordered; sequence RPLALPSTSHSGRDDGDDLSGMV. The segment at residues 215–278 is a DNA-binding region (homeobox); that stretch reads KKRFRTKFTQ…NNKHTLGKKL (64 aa).

Homo- and heterodimer with other ZFHD proteins.

It is found in the nucleus. Putative transcription factor. In Oryza sativa subsp. japonica (Rice), this protein is Zinc-finger homeodomain protein 1 (ZHD1).